A 274-amino-acid polypeptide reads, in one-letter code: Proliferating cell nuclear antigen 1 (274 aa).

The DNA-binding element occupies 61–80 (RCDRERVLGVNIASLNKVFK).

The protein belongs to the PCNA family. As to quaternary structure, homotrimer. Interacts with ORC1 (via PIP-box motif); the interaction occurs during DNA replication in trophozoites. Interacts with ORC5; the interaction occurs during the trophozoite stage but not at the late schizont stage. Interacts with FEN1.

It localises to the nucleus. The protein localises to the chromosome. The protein resides in the cytoplasm. Its function is as follows. Auxiliary protein of DNA polymerase delta and is involved in the control of DNA replication by increasing the polymerase processibility during elongation of the leading strand. Involved in DNA damage response. In Plasmodium falciparum (isolate 3D7), this protein is Proliferating cell nuclear antigen 1.